A 185-amino-acid chain; its full sequence is Neuronal vesicle trafficking-associated protein 1 (185 aa).

At 1-82 (MVKLGNNFAE…ITEGVTERFK (82 aa)) the chain is on the cytoplasmic side. A helical; Signal-anchor for type II membrane protein transmembrane segment spans residues 83–103 (VSVLVLFALAFLTCVVFLVVY). Over 104-185 (KVYKYDRACP…QETEAAEKSA (82 aa)) the chain is Lumenal. The required for GRIP1 interaction stretch occupies residues 129-164 (ESYYTEQDSSAREKFYTVINHYNVAKQSITRSVSPW).

It belongs to the NSG family. Forms a complex with GRIP1, GRIA2 and STX12 through direct interaction with GRIP1; controls the intracellular fate of AMPAR and the endosomal sorting of the GRIA2 subunit toward recycling and membrane targeting. Interacts with STX12. Interacts with APP; could regulate APP processing. Interacts with FAM171A1. In terms of tissue distribution, pituitary and less in adrenal gland and testis. Expressed in the hippocampus throughout development. At P0, highly and broadly expressed throughout the cortical plate, but is down-regulated overall at P8 and P14, but remains relatively enriched in layer V. At P0 is expressed ubiquitously in the developing cerebellum namely Purkinje neurons as well as granule neurons. However, it becomes restricted to Purkinje cells by P8. This exclusive expression in Purkinje cells is maintained throughout adulthood.

The protein localises to the membrane. The protein resides in the golgi apparatus. Its subcellular location is the trans-Golgi network membrane. It localises to the endosome membrane. It is found in the cell projection. The protein localises to the dendrite. The protein resides in the early endosome membrane. Its subcellular location is the late endosome membrane. It localises to the lysosome lumen. It is found in the recycling endosome membrane. The protein localises to the cytoplasmic vesicle membrane. The protein resides in the golgi stack membrane. Its subcellular location is the endosome. It localises to the multivesicular body membrane. It is found in the endoplasmic reticulum membrane. Plays a role in the recycling mechanism in neurons of multiple receptors, including AMPAR, APP and L1CAM and acts at the level of early endosomes to promote sorting of receptors toward a recycling pathway. Regulates sorting and recycling of GRIA2 through interaction with GRIP1 and then contributes to the regulation of synaptic transmission and plasticity by affecting the recycling and targeting of AMPA receptors to the synapse. Is required for faithful sorting of L1CAM to axons by facilitating trafficking from somatodendritic early endosome or the recycling endosome. In an other hand, induces apoptosis via the activation of CASP3 in response to DNA damage. The protein is Neuronal vesicle trafficking-associated protein 1 of Mus musculus (Mouse).